The following is a 734-amino-acid chain: MVLRFPKFSQSLAQDPTTRRIWFGIATAHDFESHNEITEERLYQNIFASHFGQLAIIFLWTSGNLFHVAWEGNFESWVQDPLHVRPIAHAIWDPHFGQPAVETFTRGGAVDPVNIAYSGVYQWWYTIGLRTKEDLYTGALFLFLISAISLIAGWLHLQPKWKPNIAWFKNAESRLNHHLAGLFGVSSLAWTGHLVHVAIPASRGEYVRWNNLLDQLPHPQGLGPLFTGQWNLYAQNPDSSSHCFGTSQGAGTAILTFLGGFHPETQSLWLTDIAHHHLAITLLFFVAGHMYRTNFGIGHSLKNLLDAHIPPGGRLGRGHQGLYDTLNNSLHFQLGLALASLGVFTSLVAQHMYSLPSYAFIAQDFTTQAALYAHHQYIAGFIMTGAFAHGAIFFIRDYNPEQNKDNVLARILDHKQAIISHLSWVSLFLGFHTLGLYIHNDVMLAFGTPEKQILIEPIFAQWIQSAHGKTSYGFDVLLSSTNGPAVNAGQHLWLPEWLKAVNDTSNSLFLTIGPGDFLVHHAIALGLHTTTLILVKGALDARGSTLMPDKKEFGYSFPCDGPGRGGTCDISAWDAFYLAVFWMLNTIGWVTFYWHWKHLTLWQDNVSQFNESSTYLMGWLRDYLWLNSSQLINGYNPFGMNSLSVWAWMFLFGHLVWATGFMFLISWRGYWQELIETLVWAHERTPLANLIHWRDKPVALSIVQARFVGLAHFSVGYIFTYAAFLIASTSGKFG.

Helical transmembrane passes span 46–69, 135–158, 175–199, 273–291, 330–353, 369–395, 417–439, and 517–535; these read IFAS…FHVA, LYTG…LHLQ, LNHH…HVAI, IAHH…GHMY, LHFQ…QHMY, AALY…IFFI, AIIS…LYIH, and FLVH…LILV. 2 residues coordinate [4Fe-4S] cluster: C559 and C568. The next 2 membrane-spanning stretches (helical) occupy residues 575–596 and 643–665; these read AFYL…YWHW and LSVW…MFLI. 3 residues coordinate chlorophyll a: H654, M662, and Y670. W671 contacts phylloquinone. A helical membrane pass occupies residues 707–727; the sequence is FVGLAHFSVGYIFTYAAFLIA.

This sequence belongs to the PsaA/PsaB family. The PsaA/B heterodimer binds the P700 chlorophyll special pair and subsequent electron acceptors. PSI consists of a core antenna complex that captures photons, and an electron transfer chain that converts photonic excitation into a charge separation. The eukaryotic PSI reaction center is composed of at least 11 subunits. P700 is a chlorophyll a/chlorophyll a' dimer, A0 is one or more chlorophyll a, A1 is one or both phylloquinones and FX is a shared 4Fe-4S iron-sulfur center. serves as cofactor.

It is found in the plastid membrane. The enzyme catalyses reduced [plastocyanin] + hnu + oxidized [2Fe-2S]-[ferredoxin] = oxidized [plastocyanin] + reduced [2Fe-2S]-[ferredoxin]. In terms of biological role, psaA and PsaB bind P700, the primary electron donor of photosystem I (PSI), as well as the electron acceptors A0, A1 and FX. PSI is a plastocyanin-ferredoxin oxidoreductase, converting photonic excitation into a charge separation, which transfers an electron from the donor P700 chlorophyll pair to the spectroscopically characterized acceptors A0, A1, FX, FA and FB in turn. Oxidized P700 is reduced on the lumenal side of the thylakoid membrane by plastocyanin. The protein is Photosystem I P700 chlorophyll a apoprotein A2 of Cuscuta sandwichiana (Kauna'oa).